The chain runs to 296 residues: Sulfotransferase 1C2 (296 aa).

49–54 contacts 3'-phosphoadenylyl sulfate; sequence KAGTTW. Position 107 to 109 (107 to 109) interacts with substrate; it reads KTH. Histidine 109 functions as the Proton acceptor in the catalytic mechanism. 3'-phosphoadenylyl sulfate-binding positions include arginine 131, serine 139, tyrosine 194, and 228–233; that span reads TSFEKM. The residue at position 139 (serine 139) is a Phosphoserine. Serine 254 is modified (phosphoserine). A 3'-phosphoadenylyl sulfate-binding site is contributed by 256–260; the sequence is FMRKG.

This sequence belongs to the sulfotransferase 1 family. In terms of tissue distribution, found in adult stomach, kidney and thyroid gland, and in fetal kidney and liver.

Its subcellular location is the cytoplasm. It is found in the lysosome. The protein localises to the mitochondrion. The catalysed reaction is a phenol + 3'-phosphoadenylyl sulfate = an aryl sulfate + adenosine 3',5'-bisphosphate + H(+). The enzyme catalyses cholesterol + 3'-phosphoadenylyl sulfate = cholesterol sulfate + adenosine 3',5'-bisphosphate + H(+). Its function is as follows. Sulfotransferase that utilizes 3'-phospho-5'-adenylyl sulfate (PAPS) to catalyze the sulfate conjugation of phenolic compounds. Does not transfer sulfate to steroids, dopamine, acetaminophen, or alpha-naphthol. Except in mitochondria, where it can add sulfate to cholesterol producing cholesterol sulfate, which alters mitochondrial membrane organization, and impacts protein complex mobility increasing state-III respiration, thereby modulating mitochondrial respiration. Catalyzes the sulfation of the carcinogenic N-hydroxy-2-acetylaminofluorene leading to highly reactive intermediates capable of forming DNA adducts, potentially resulting in mutagenesis. This is Sulfotransferase 1C2 (SULT1C2) from Homo sapiens (Human).